The following is a 395-amino-acid chain: D-alanine--D-alanine ligase (395 aa).

Residues 172–391 form the ATP-grasp domain; sequence KVVLDAAGIP…YTELITRLIE (220 aa). 204–266 lines the ATP pocket; the sequence is DAGLTYPLFV…EQGIDGREIE (63 aa). Positions 345, 358, and 360 each coordinate Mg(2+).

It belongs to the D-alanine--D-alanine ligase family. Mg(2+) serves as cofactor. Mn(2+) is required as a cofactor.

It is found in the cytoplasm. The catalysed reaction is 2 D-alanine + ATP = D-alanyl-D-alanine + ADP + phosphate + H(+). It participates in cell wall biogenesis; peptidoglycan biosynthesis. In terms of biological role, cell wall formation. In Bifidobacterium longum (strain DJO10A), this protein is D-alanine--D-alanine ligase.